The chain runs to 336 residues: 4-hydroxy-3-methylbut-2-enyl diphosphate reductase (336 aa).

A disordered region spans residues 1–23; that stretch reads MFGQRLDTLGAMSSSVSSPSPET. Cys-36 contributes to the [4Fe-4S] cluster binding site. The (2E)-4-hydroxy-3-methylbut-2-enyl diphosphate site is built by His-65 and His-98. His-65 and His-98 together coordinate dimethylallyl diphosphate. Residues His-65 and His-98 each coordinate isopentenyl diphosphate. Cys-120 lines the [4Fe-4S] cluster pocket. Residue His-148 participates in (2E)-4-hydroxy-3-methylbut-2-enyl diphosphate binding. His-148 provides a ligand contact to dimethylallyl diphosphate. His-148 is an isopentenyl diphosphate binding site. The active-site Proton donor is the Glu-150. Thr-190 contributes to the (2E)-4-hydroxy-3-methylbut-2-enyl diphosphate binding site. A [4Fe-4S] cluster-binding site is contributed by Cys-220. Positions 248, 249, 250, and 293 each coordinate (2E)-4-hydroxy-3-methylbut-2-enyl diphosphate. Dimethylallyl diphosphate contacts are provided by Ser-248, Ser-249, Asn-250, and Ser-293. Residues Ser-248, Ser-249, Asn-250, and Ser-293 each contribute to the isopentenyl diphosphate site.

Belongs to the IspH family. It depends on [4Fe-4S] cluster as a cofactor.

It catalyses the reaction isopentenyl diphosphate + 2 oxidized [2Fe-2S]-[ferredoxin] + H2O = (2E)-4-hydroxy-3-methylbut-2-enyl diphosphate + 2 reduced [2Fe-2S]-[ferredoxin] + 2 H(+). The catalysed reaction is dimethylallyl diphosphate + 2 oxidized [2Fe-2S]-[ferredoxin] + H2O = (2E)-4-hydroxy-3-methylbut-2-enyl diphosphate + 2 reduced [2Fe-2S]-[ferredoxin] + 2 H(+). The protein operates within isoprenoid biosynthesis; dimethylallyl diphosphate biosynthesis; dimethylallyl diphosphate from (2E)-4-hydroxy-3-methylbutenyl diphosphate: step 1/1. Its pathway is isoprenoid biosynthesis; isopentenyl diphosphate biosynthesis via DXP pathway; isopentenyl diphosphate from 1-deoxy-D-xylulose 5-phosphate: step 6/6. Functionally, catalyzes the conversion of 1-hydroxy-2-methyl-2-(E)-butenyl 4-diphosphate (HMBPP) into a mixture of isopentenyl diphosphate (IPP) and dimethylallyl diphosphate (DMAPP). Acts in the terminal step of the DOXP/MEP pathway for isoprenoid precursor biosynthesis. In Corynebacterium efficiens (strain DSM 44549 / YS-314 / AJ 12310 / JCM 11189 / NBRC 100395), this protein is 4-hydroxy-3-methylbut-2-enyl diphosphate reductase.